The primary structure comprises 172 residues: Shikimate kinase (172 aa).

Residue 14–19 participates in ATP binding; that stretch reads GAGKST. Ser-18 is a Mg(2+) binding site. Substrate-binding residues include Asp-36, Arg-60, and Gly-82. Arg-120 is a binding site for ATP. Residue Arg-139 participates in substrate binding. An ATP-binding site is contributed by Gln-156.

Belongs to the shikimate kinase family. In terms of assembly, monomer. Mg(2+) is required as a cofactor.

It localises to the cytoplasm. The enzyme catalyses shikimate + ATP = 3-phosphoshikimate + ADP + H(+). The protein operates within metabolic intermediate biosynthesis; chorismate biosynthesis; chorismate from D-erythrose 4-phosphate and phosphoenolpyruvate: step 5/7. Functionally, catalyzes the specific phosphorylation of the 3-hydroxyl group of shikimic acid using ATP as a cosubstrate. The protein is Shikimate kinase of Aliivibrio fischeri (strain ATCC 700601 / ES114) (Vibrio fischeri).